A 1082-amino-acid polypeptide reads, in one-letter code: MPKDKALKKVMVIGSGPIIIGQAAEFDYAGTQACRALREEGLEVVLINSNPATIMTDANMADRIYIEPLTPEFVAKVISQERPDALLPTLGGQTGLNLAKQVADAGILDQYGVRLLGTPLESIKRAEDREHFKNMCLEIGEPVPESSIISDVDAAVAFARKIGYPVVVRPAYTLGGTGGGVAFSEDELREIAVRGLTMSIIHQVLVEKCVLGWKEIEYEVMRDAAGNCITICSMENIDPMGIHTGDSIVVAPTQTLSDREHQMLRSASLKIIRALGVEGGCNVQFALDPESYDYYVIEVNPRLSRSSALASKATGYPIAKVATKVAVGLTLDEIKNAVTGKTYACFEPALDYVVVKYPRWPFDKFSLANRNLGTQMKSTGEVMAIGRTFEEALLKAVRSLETGVTGMNLPELREWDNDRLRARMARPDDLRLFLVAEALRRGFPVNEIFELTRIDRFFLDKIKNITEAEELVRAARPTDVGTPTGVGAPAGLTPELLRRVKRIGLSDTTIAELVGTTSREVHRLRRELGVEPVYKMVDTCAGEFEATTPYYYSTYEDEDEAEPQAVRKVVVLGSGPIRIGQGIEFDYCSVHSVWALKEQGVKAIIINNNPETVSTDFDTADRLYFEPLVPEDVMNILHKEKPDGVIVQFGGQTAINLARPVEKAGFNILGTSVADIDRAEDRERFDQLVAELGIPRPPGGTGFSVEEAQRIAEQVGFPVLVRPSYVLGGRAMEIVYNSQELLEYMADAVRVTPKHPVLVDKYLLGKELEVDAVCDGETVLVPGIMEHVERAGIHSGDSIAVFPPQTLTPEIKEQLFEYTQQIARALKIRGLVNIQFVLHEGRVFVLEVNPRSSRTVPYLSKVTGIPMVNLATRICLGATLPELGYRGGLYEETRNIAVKAPVFSFAKLLDVDVCLGPEMKSTGEVMGVSKDYALALYKACLSAGYTLPSSGKAVVTIADRDKDEALPLVRSLVNLGFEIVATEGTAAFLRSRAITVEVARKVHEGSPNIVDLIRENRIHLVVNTLTKGKLTTRDGFRIRRAAVEMGVPCLTSLDTARVVIEVMRARQRGETMPLIPLQEYVS.

A carboxyphosphate synthetic domain region spans residues 1–401 (MPKDKALKKV…ALLKAVRSLE (401 aa)). ATP is bound by residues Arg-129, Arg-169, Gly-175, Gly-176, Lys-208, Val-210, Glu-215, Gly-241, Ile-242, His-243, Gln-284, and Glu-298. The 195-residue stretch at 133 to 327 (KNMCLEIGEP…IAKVATKVAV (195 aa)) folds into the ATP-grasp 1 domain. Mg(2+) is bound by residues Gln-284, Glu-298, and Asn-300. Residues Gln-284, Glu-298, and Asn-300 each coordinate Mn(2+). The oligomerization domain stretch occupies residues 402–561 (TGVTGMNLPE…YSTYEDEDEA (160 aa)). The carbamoyl phosphate synthetic domain stretch occupies residues 562-944 (EPQAVRKVVV…ALYKACLSAG (383 aa)). The region spanning 686–876 (DQLVAELGIP…MVNLATRICL (191 aa)) is the ATP-grasp 2 domain. ATP contacts are provided by Arg-722, Lys-761, Leu-763, Glu-767, Gly-792, Ile-793, His-794, Ser-795, Gln-835, and Glu-847. Mg(2+)-binding residues include Gln-835, Glu-847, and Asn-849. 3 residues coordinate Mn(2+): Gln-835, Glu-847, and Asn-849. The region spanning 945–1082 (YTLPSSGKAV…PLIPLQEYVS (138 aa)) is the MGS-like domain. The interval 945-1082 (YTLPSSGKAV…PLIPLQEYVS (138 aa)) is allosteric domain.

The protein belongs to the CarB family. In terms of assembly, composed of two chains; the small (or glutamine) chain promotes the hydrolysis of glutamine to ammonia, which is used by the large (or ammonia) chain to synthesize carbamoyl phosphate. Tetramer of heterodimers (alpha,beta)4. The cofactor is Mg(2+). It depends on Mn(2+) as a cofactor.

The catalysed reaction is hydrogencarbonate + L-glutamine + 2 ATP + H2O = carbamoyl phosphate + L-glutamate + 2 ADP + phosphate + 2 H(+). The enzyme catalyses hydrogencarbonate + NH4(+) + 2 ATP = carbamoyl phosphate + 2 ADP + phosphate + 2 H(+). Its pathway is amino-acid biosynthesis; L-arginine biosynthesis; carbamoyl phosphate from bicarbonate: step 1/1. It participates in pyrimidine metabolism; UMP biosynthesis via de novo pathway; (S)-dihydroorotate from bicarbonate: step 1/3. Large subunit of the glutamine-dependent carbamoyl phosphate synthetase (CPSase). CPSase catalyzes the formation of carbamoyl phosphate from the ammonia moiety of glutamine, carbonate, and phosphate donated by ATP, constituting the first step of 2 biosynthetic pathways, one leading to arginine and/or urea and the other to pyrimidine nucleotides. The large subunit (synthetase) binds the substrates ammonia (free or transferred from glutamine from the small subunit), hydrogencarbonate and ATP and carries out an ATP-coupled ligase reaction, activating hydrogencarbonate by forming carboxy phosphate which reacts with ammonia to form carbamoyl phosphate. The polypeptide is Carbamoyl phosphate synthase large chain (Desulforudis audaxviator (strain MP104C)).